A 662-amino-acid polypeptide reads, in one-letter code: Histone-lysine N-methyltransferase SET9 (662 aa).

In terms of domain architecture, SET spans 114–228 (CPFEVTTTNR…EGDEITVSYG (115 aa)). 2 disordered regions span residues 252 to 418 (WAPM…DEHH) and 627 to 662 (ESIR…RKTM). Acidic residues predominate over residues 260–271 (DSDDEDMEEAES). Over residues 279 to 289 (ATSSGTATSGG) the composition is skewed to low complexity. Over residues 323 to 333 (RASDHLREATL) the composition is skewed to basic and acidic residues. Polar residues-rich tracts occupy residues 356 to 370 (ANIN…QDIR), 382 to 395 (LDET…TPQS), and 402 to 411 (PKSSHSTDAT). The segment covering 627–640 (ESIRERFSTPRSGR) has biased composition (basic and acidic residues). Basic residues predominate over residues 653–662 (RKRRRVRKTM).

This sequence belongs to the class V-like SAM-binding methyltransferase superfamily. Histone-lysine methyltransferase family. Suvar4-20 subfamily.

The protein resides in the nucleus. It localises to the chromosome. The catalysed reaction is L-lysyl(20)-[histone H4] + 3 S-adenosyl-L-methionine = N(6),N(6),N(6)-trimethyl-L-lysyl(20)-[histone H4] + 3 S-adenosyl-L-homocysteine + 3 H(+). Functionally, histone methyltransferase that trimethylates 'Lys-20' of histone H4 to form H4K20me3. This Phaeosphaeria nodorum (strain SN15 / ATCC MYA-4574 / FGSC 10173) (Glume blotch fungus) protein is Histone-lysine N-methyltransferase SET9 (SET9).